The chain runs to 400 residues: MAEAMDLGKDPNGPTHSSTLFVREDGSSMSFYVRPSPAKRRLSTLILHGGGTVCRVQEPGAVLLAQPGEALAEASGDFISTQYILDCVERNERLELEAYRLGSASAADTGSEAKPGALAEGAAEPEPQRLAGRIAFTDADDVAILTYVKENARSPSSVTGNALWKAMEKSSLTQHSWQSLKDRYLKHLRGQEHKYLLGDAPVSPSSQKLKRKAEEDPEAADSGEPQNKRTPDLPEEEYVKEEIQENEEAVKKMLVEATREFEEVVVDESPPDFEIHITMCDDDPPTPEEDSETQPDEEEEEEEEEKVSQPEVGAAIKIIRQLMEKFNLDLSTVTQAFLKNSGELEATSAFLASGQRADGYPIWSRQDDIDLQKDDEDTREALVKKFGAQNVARRIEFRKK.

An N-acetylalanine modification is found at A2. Phosphoserine is present on residues S36 and S43. One can recognise a BRCT domain in the interval 78-101; that stretch reads FISTQYILDCVERNERLELEAYRL. Residues 105–126 form a disordered region; it reads SAADTGSEAKPGALAEGAAEPE. Low complexity predominate over residues 112-125; that stretch reads EAKPGALAEGAAEP. Residue K114 forms a Glycyl lysine isopeptide (Lys-Gly) (interchain with G-Cter in SUMO2) linkage. One can recognise a Myb-like domain in the interval 128–188; sequence QRLAGRIAFT…SLKDRYLKHL (61 aa). Phosphoserine is present on residues S154 and S156. K194 is covalently cross-linked (Glycyl lysine isopeptide (Lys-Gly) (interchain with G-Cter in SUMO2)). Disordered stretches follow at residues 196 to 244 and 264 to 311; these read LLGD…EEIQ and VVVD…SQPE. Residues S203 and S206 each carry the phosphoserine modification. Residues K208, K212, and K240 each participate in a glycyl lysine isopeptide (Lys-Gly) (interchain with G-Cter in SUMO2) cross-link. Acidic residues predominate over residues 280–305; that stretch reads CDDDPPTPEEDSETQPDEEEEEEEEE. K373 is covalently cross-linked (Glycyl lysine isopeptide (Lys-Gly) (interchain with G-Cter in SUMO2)). Residues 384 to 400 carry the Nuclear localization signal motif; the sequence is KKFGAQNVARRIEFRKK.

It belongs to the RAP1 family. As to quaternary structure, associates with the I-kappa-B-kinase (IKK) core complex, composed of CHUK, IKBKB and IKBKG. Homodimer. Component of the shelterin complex (telosome) composed of TERF1, TERF2, TINF2, TERF2IP ACD and POT1. Interacts with TERF2 (but not TERF1) with its C-terminus. Interacts with SLX4/BTBD12. Interacts with TERF2; the interaction is direct.

Its subcellular location is the nucleus. The protein resides in the cytoplasm. It localises to the chromosome. It is found in the telomere. Acts both as a regulator of telomere function and as a transcription regulator. Involved in the regulation of telomere length and protection as a component of the shelterin complex (telosome). In contrast to other components of the shelterin complex, it is dispensible for telomere capping and does not participate in the protection of telomeres against non-homologous end-joining (NHEJ)-mediated repair. Instead, it is required to negatively regulate telomere recombination and is essential for repressing homology-directed repair (HDR), which can affect telomere length. Does not bind DNA directly: recruited to telomeric double-stranded 5'-TTAGGG-3' repeats via its interaction with TERF2. Independently of its function in telomeres, also acts as a transcription regulator: recruited to extratelomeric 5'-TTAGGG-3' sites via its association with TERF2 or other factors, and regulates gene expression. When cytoplasmic, associates with the I-kappa-B-kinase (IKK) complex and acts as a regulator of the NF-kappa-B signaling by promoting IKK-mediated phosphorylation of RELA/p65, leading to activate expression of NF-kappa-B target genes. In Macaca fascicularis (Crab-eating macaque), this protein is Telomeric repeat-binding factor 2-interacting protein 1 (TERF2IP).